The following is a 99-amino-acid chain: UPF0751 protein BCE_A0020 (99 aa).

This sequence belongs to the UPF0751 family.

This chain is UPF0751 protein BCE_A0020, found in Bacillus cereus (strain ATCC 10987 / NRS 248).